A 305-amino-acid chain; its full sequence is Cytochrome c biogenesis protein CcsA (305 aa).

Transmembrane regions (helical) follow at residues 11–31 (ANAS…KAIF), 36–56 (ILQL…ALLL), 75–95 (LMFL…YIQI), 97–117 (FIGF…TFFL), 142–162 (IMMA…AFLF), 212–232 (TIGI…VWAN), 239–259 (WSWD…AIYL), and 273–293 (AIVA…VNLL).

Belongs to the CcmF/CycK/Ccl1/NrfE/CcsA family. As to quaternary structure, may interact with Ccs1.

The protein localises to the plastid. The protein resides in the chloroplast thylakoid membrane. Required during biogenesis of c-type cytochromes (cytochrome c6 and cytochrome f) at the step of heme attachment. In Mesostigma viride (Green alga), this protein is Cytochrome c biogenesis protein CcsA.